The following is a 578-amino-acid chain: Transcriptional regulator SKO1 (578 aa).

Polar residues predominate over residues 39–50 (NDAISDVNSVAT). 4 disordered regions span residues 39–169 (NDAI…TQQP), 176–195 (MSGM…RSGL), 287–311 (LQQD…QPQP), and 342–489 (ESKP…RKNF). A compositionally biased stretch (low complexity) spans 51–62 (SGSSINNGSSSN). 2 stretches are compositionally biased toward polar residues: residues 70–80 (NISSVNQQQGV) and 107–132 (GGTT…TLGS). The span at 154-169 (PQQQQQPQQQQQTQQP) shows a compositional bias: low complexity. Polar residues predominate over residues 184 to 193 (LTPNESNIRS). Composition is skewed to low complexity over residues 287-296 (LQQDQSSQAL) and 356-370 (DLNP…TTTA). Residues 384–402 (KKAKVAKGKKKEPKSKSKG) are compositionally biased toward basic residues. Over residues 415-443 (KPEDENVPGKENGNEENHKVEAESKEEHL) the composition is skewed to basic and acidic residues. Positions 445–471 (NGNETTTTKTNNTGNSSNGTTTTTTTK) are enriched in low complexity. Residues 483-546 (DDKRKNFLER…LLLKEKHNIQ (64 aa)) enclose the bZIP domain. The tract at residues 485–505 (KRKNFLERNRVAASKCRQRKK) is basic motif. The tract at residues 508–515 (IQKMEEEL) is leucine-zipper.

The protein belongs to the bZIP family. Post-translationally, undergoes HOG1-dependent phosphorylation after osmotic stress.

It is found in the nucleus. In terms of biological role, transcription repressor involved in cell wall damage response. Regulates 79 caspofungin-responsive genes, including several cell wall biogenesis genes such as CRH11, MNN2, and SKN1. Also controls the expression of pathogenesis and hyphal related genes and represses the yeast-to-hypha transition. Mediates the response to oxidative stress. This Candida albicans (strain SC5314 / ATCC MYA-2876) (Yeast) protein is Transcriptional regulator SKO1 (SKO1).